We begin with the raw amino-acid sequence, 208 residues long: V-type ATP synthase subunit E (208 aa).

The protein belongs to the V-ATPase E subunit family.

Its function is as follows. Produces ATP from ADP in the presence of a proton gradient across the membrane. This is V-type ATP synthase subunit E (atpE) from Chlamydia muridarum (strain MoPn / Nigg).